We begin with the raw amino-acid sequence, 607 residues long: Homologous recombination OB-fold protein (607 aa).

Disordered regions lie at residues 25 to 49, 84 to 108, 196 to 308, and 531 to 581; these read LRPNSSRPQETPQAHSSKLSPSYPA, ISSSSSGSQQRMTGTKVSQESSGRQ, PWPS…TTVT, and LKPP…DDLD. 2 stretches are compositionally biased toward polar residues: residues 27–49 and 92–108; these read PNSSRPQETPQAHSSKLSPSYPA and QQRMTGTKVSQESSGRQ. The residue at position 30 (serine 30) is a Phosphoserine. Position 281 is an asymmetric dimethylarginine (arginine 281). A compositionally biased stretch (low complexity) spans 295–308; it reads SPFSTPRSTSTTVT. Residues 570–581 are compositionally biased toward acidic residues; the sequence is PEEELPEADDLD.

As to quaternary structure, interacts with MCM8; this interaction is necessary for MCM8-MCM9 helicase complex recruitment to DNA damage sites. Interacts with RPA1; this interaction associates HROB with the RPA complex.

Its subcellular location is the nucleus. The protein resides in the chromosome. In terms of biological role, DNA-binding protein involved in homologous recombination that acts by recruiting the MCM8-MCM9 helicase complex to sites of DNA damage to promote DNA repair synthesis. This Rattus norvegicus (Rat) protein is Homologous recombination OB-fold protein.